The chain runs to 102 residues: Small ribosomal subunit protein uS10 (102 aa).

Belongs to the universal ribosomal protein uS10 family. Part of the 30S ribosomal subunit.

Functionally, involved in the binding of tRNA to the ribosomes. This is Small ribosomal subunit protein uS10 from Chlorobium phaeobacteroides (strain BS1).